A 594-amino-acid chain; its full sequence is Protein REBELOTE (594 aa).

The span at 1-13 (MGKLGKKARKFAK) shows a compositional bias: basic residues. Disordered regions lie at residues 1–21 (MGKL…SVEK) and 35–58 (AKRN…PKKR). 3 consecutive short sequence motifs (nuclear localization signal) follow at residues 8–15 (ARKFAKKN), 35–42 (AKRNERHQ), and 512–519 (LKKFHERS). Basic and acidic residues predominate over residues 36–58 (KRNERHQAGDKQEKKVEQQPKKR).

This sequence belongs to the NOC2 family. As to quaternary structure, interacts with SWA2, NOC2 and NOC3 in both the nucleolus and nucleoplasm. Binds to ENAP1 and OBE1. Expressed at low levels in roots, shoots, leaves, stems, inflorescences, flowers and siliques, with highest levels dividing tissues.

It is found in the nucleus. The protein resides in the nucleolus. The protein localises to the nucleoplasm. Its function is as follows. Collaboratively with CYP40/SQN and ULT1, influences floral meristem (FM) determinacy in an AGAMOUS and SUPERMAN-dependent manner, thus contributing to the floral developmental homeostasis. This Arabidopsis thaliana (Mouse-ear cress) protein is Protein REBELOTE.